The primary structure comprises 275 residues: U6 snRNA phosphodiesterase 1 (275 aa).

The segment at 1–25 is disordered; it reads MEFLKHYEDDEDQDDENNTKDENVN. Histidine 122 serves as the catalytic Proton acceptor. AMP-binding positions include 122–124, tyrosine 206, and 208–214; these read HIS and NPEPHLS. UMP is bound by residues tyrosine 206 and 210 to 214; that span reads EPHLS. The Proton donor role is filled by histidine 212.

This sequence belongs to the 2H phosphoesterase superfamily. USB1 family.

Its subcellular location is the nucleus. It catalyses the reaction a 3'-end uridylyl-uridine-RNA = a 3'-end 2',3'-cyclophospho-uridine-RNA + uridine. Functionally, 3'-5' RNA exonuclease that trims the 3' end of oligo(U) tracts of the pre-U6 small nuclear RNA (snRNA) molecule, leading to the formation of a mature U6 snRNA 3' end-terminated with a 2',3'-cyclic phosphate. Participates in the U6 snRNA 3' end processing that prevents U6 snRNA degradation. The polypeptide is U6 snRNA phosphodiesterase 1 (Dictyostelium discoideum (Social amoeba)).